Consider the following 503-residue polypeptide: Probable cytosol aminopeptidase (503 aa).

Mn(2+) contacts are provided by Lys270 and Asp275. Residue Lys282 is part of the active site. Mn(2+) is bound by residues Asp293, Asp352, and Glu354. The active site involves Arg356.

The protein belongs to the peptidase M17 family. The cofactor is Mn(2+).

The protein localises to the cytoplasm. It carries out the reaction Release of an N-terminal amino acid, Xaa-|-Yaa-, in which Xaa is preferably Leu, but may be other amino acids including Pro although not Arg or Lys, and Yaa may be Pro. Amino acid amides and methyl esters are also readily hydrolyzed, but rates on arylamides are exceedingly low.. It catalyses the reaction Release of an N-terminal amino acid, preferentially leucine, but not glutamic or aspartic acids.. Presumably involved in the processing and regular turnover of intracellular proteins. Catalyzes the removal of unsubstituted N-terminal amino acids from various peptides. The polypeptide is Probable cytosol aminopeptidase (Pectobacterium atrosepticum (strain SCRI 1043 / ATCC BAA-672) (Erwinia carotovora subsp. atroseptica)).